A 188-amino-acid polypeptide reads, in one-letter code: Capsid protein (188 aa).

Belongs to the tymoviruses capsid protein family.

It localises to the virion. Functionally, self-assembles to form a T=3 icosahedral capsid composed of 180 copies of the capsid protein. The capsid encapsulates the single-stranded RNA genome. The protein is Capsid protein of Theobroma cacao (Cacao).